The chain runs to 168 residues: Small ribosomal subunit protein uS7c (168 aa).

This sequence belongs to the universal ribosomal protein uS7 family. As to quaternary structure, part of the 30S ribosomal subunit.

Its subcellular location is the plastid. The protein localises to the chloroplast. In terms of biological role, one of the primary rRNA binding proteins, it binds directly to 16S rRNA where it nucleates assembly of the head domain of the 30S subunit. The chain is Small ribosomal subunit protein uS7c (rps7) from Chlamydomonas reinhardtii (Chlamydomonas smithii).